Reading from the N-terminus, the 152-residue chain is Small ribosomal subunit protein uS13 (152 aa).

The protein belongs to the universal ribosomal protein uS13 family. Part of the 30S ribosomal subunit. Forms a loose heterodimer with protein S19. Forms two bridges to the 50S subunit in the 70S ribosome.

In terms of biological role, located at the top of the head of the 30S subunit, it contacts several helices of the 16S rRNA. In the 70S ribosome it contacts the 23S rRNA (bridge B1a) and protein L5 of the 50S subunit (bridge B1b), connecting the 2 subunits; these bridges are implicated in subunit movement. The protein is Small ribosomal subunit protein uS13 of Pyrobaculum arsenaticum (strain DSM 13514 / JCM 11321 / PZ6).